A 236-amino-acid polypeptide reads, in one-letter code: Probable ascorbate-specific transmembrane electron transporter 2 (236 aa).

Over 1–11 (MAAGLGVKAAP) the chain is Cytoplasmic. A helical membrane pass occupies residues 12–32 (FTYVAHALAVAAAVMVLVWCI). Residues 15–219 (VAHALAVAAA…FGAAVVVAAV (205 aa)) enclose the Cytochrome b561 domain. Residues 33-53 (SFRGGLAFEADNKNLIFNVHP) are Extracellular-facing. Residue H52 participates in heme b binding. The helical transmembrane segment at 54–74 (VLMLIGYIILGSEAIMIYKIF) threads the bilayer. 67-75 (AIMIYKIFP) provides a ligand contact to L-ascorbate. Residues 75–84 (PKLNHDTTKL) are Cytoplasmic-facing. The helical transmembrane segment at 85–105 (IHLILHAIAIVLGAVGIYCAF) threads the bilayer. 2 residues coordinate heme b: H86 and H120. Over 106 to 122 (KFHNESGIANLYSLHSW) the chain is Extracellular. 116-125 (LYSLHSWLGI) serves as a coordination point for monodehydro-L-ascorbate radical. Residues 123 to 143 (LGIGTISLYGIQWIFGFVAFF) traverse the membrane as a helical segment. At 144 to 153 (YPGAAPHVRR) the chain is on the cytoplasmic side. The chain crosses the membrane as a helical span at residues 154-174 (GALPWHVLFGLFVYVLTLATA). Heme b is bound at residue H159. Over 175-196 (ELGLLEKLTFLQSSGLDKYGAE) the chain is Extracellular. The chain crosses the membrane as a helical span at residues 197-217 (AFLVNFTGLVVALFGAAVVVA). Topologically, residues 218–236 (AVAPAHVEEPEGYAPIPVN) are cytoplasmic.

Heme b serves as cofactor.

Its subcellular location is the membrane. Functionally, two-heme-containing cytochrome. Catalyzes ascorbate-dependent trans-membrane electron transfer by utilizing a concerted H(+)/e(-) transfer mechanism. The polypeptide is Probable ascorbate-specific transmembrane electron transporter 2 (Oryza sativa subsp. japonica (Rice)).